A 469-amino-acid chain; its full sequence is Probable Xaa-Pro aminopeptidase PEPP (469 aa).

4 residues coordinate Mn(2+): Asp265, Asp276, Glu399, and Glu439.

Belongs to the peptidase M24B family. It depends on Mn(2+) as a cofactor.

It catalyses the reaction Release of any N-terminal amino acid, including proline, that is linked to proline, even from a dipeptide or tripeptide.. Functionally, catalyzes the removal of a penultimate prolyl residue from the N-termini of peptides. The protein is Probable Xaa-Pro aminopeptidase PEPP (PEPP) of Coccidioides posadasii (strain RMSCC 757 / Silveira) (Valley fever fungus).